The following is a 426-amino-acid chain: Glutamate-1-semialdehyde 2,1-aminomutase (426 aa).

At Lys-265 the chain carries N6-(pyridoxal phosphate)lysine.

This sequence belongs to the class-III pyridoxal-phosphate-dependent aminotransferase family. HemL subfamily. Homodimer. Requires pyridoxal 5'-phosphate as cofactor.

The protein localises to the cytoplasm. It catalyses the reaction (S)-4-amino-5-oxopentanoate = 5-aminolevulinate. It participates in porphyrin-containing compound metabolism; protoporphyrin-IX biosynthesis; 5-aminolevulinate from L-glutamyl-tRNA(Glu): step 2/2. In Escherichia coli O127:H6 (strain E2348/69 / EPEC), this protein is Glutamate-1-semialdehyde 2,1-aminomutase.